Consider the following 329-residue polypeptide: Probable cell division protein WhiA (329 aa).

Positions 275–308 form a DNA-binding region, H-T-H motif; it reads SLEELGALADPPLTKDAVAGRIRRLLAMADKRAQ.

Belongs to the WhiA family.

Involved in cell division and chromosome segregation. This is Probable cell division protein WhiA from Streptomyces avermitilis (strain ATCC 31267 / DSM 46492 / JCM 5070 / NBRC 14893 / NCIMB 12804 / NRRL 8165 / MA-4680).